The sequence spans 519 residues: 2-isopropylmalate synthase (519 aa).

Residues 5–267 enclose the Pyruvate carboxyltransferase domain; it reads VIIFDTTLRD…QTRINHKEIY (263 aa). Mn(2+) contacts are provided by D14, H202, H204, and N238. The segment at 392-519 is regulatory domain; sequence VMNYFNTQSG…RKHHTTQEAV (128 aa).

It belongs to the alpha-IPM synthase/homocitrate synthase family. LeuA type 1 subfamily. Homodimer. Mn(2+) serves as cofactor.

It is found in the cytoplasm. The catalysed reaction is 3-methyl-2-oxobutanoate + acetyl-CoA + H2O = (2S)-2-isopropylmalate + CoA + H(+). Its pathway is amino-acid biosynthesis; L-leucine biosynthesis; L-leucine from 3-methyl-2-oxobutanoate: step 1/4. Its function is as follows. Catalyzes the condensation of the acetyl group of acetyl-CoA with 3-methyl-2-oxobutanoate (2-ketoisovalerate) to form 3-carboxy-3-hydroxy-4-methylpentanoate (2-isopropylmalate). In Proteus mirabilis (strain HI4320), this protein is 2-isopropylmalate synthase.